We begin with the raw amino-acid sequence, 590 residues long: Putative laccase-19 (590 aa).

Residues 1–28 (MEKLSMVTSLLCAITVAVLAVAVVSGEA) form the signal peptide. 2 consecutive Plastocyanin-like domains span residues 36–152 (VVHE…PRDG) and 161–315 (KDVP…YAGA). 2 N-linked (GlcNAc...) asparagine glycosylation sites follow: Asn41 and Asn47. Residues His86 and His88 each coordinate Cu cation. The N-linked (GlcNAc...) asparagine glycan is linked to Asn120. Cu cation is bound by residues His131 and His133. N-linked (GlcNAc...) asparagine glycans are attached at residues Asn205, Asn344, Asn378, Asn397, Asn434, and Asn465. Positions 424–566 (DFPIRPPRPF…ATAFIVEDGP (143 aa)) constitute a Plastocyanin-like 3 domain. Positions 483, 486, 488, 545, 546, 547, 551, and 556 each coordinate Cu cation. Positions 565-590 (GPTPETSLPPPPPEFKRCGNNGLSQP) are disordered.

Belongs to the multicopper oxidase family. Cu cation serves as cofactor.

The protein localises to the secreted. It localises to the extracellular space. It is found in the apoplast. It catalyses the reaction 4 hydroquinone + O2 = 4 benzosemiquinone + 2 H2O. Lignin degradation and detoxification of lignin-derived products. The sequence is that of Putative laccase-19 (LAC19) from Oryza sativa subsp. indica (Rice).